The primary structure comprises 169 residues: uncharacterized protein (169 aa).

The protein localises to the mitochondrion. This is an uncharacterized protein from Marchantia polymorpha (Common liverwort).